The following is a 236-amino-acid chain: Three prime repair exonuclease 2 (236 aa).

Mg(2+) contacts are provided by Asp-14 and Glu-16. Residues 16 to 17 (EA) and Tyr-122 contribute to the substrate site. Residue His-188 is the Proton donor/acceptor of the active site. Asp-193 contributes to the Mg(2+) binding site. Asp-193 provides a ligand contact to substrate.

Belongs to the exonuclease superfamily. TREX family. In terms of assembly, homodimer. Requires Mg(2+) as cofactor. In terms of tissue distribution, detected in heart, breast, prostate, skeletal muscle, testis, uterus, bone marrow, colon, small intestine, stomach and thymus.

Its subcellular location is the nucleus. It catalyses the reaction Exonucleolytic cleavage in the 3'- to 5'-direction to yield nucleoside 5'-phosphates.. In terms of biological role, exonuclease with a preference for double-stranded DNA with mismatched 3' termini. May play a role in DNA repair. In Homo sapiens (Human), this protein is Three prime repair exonuclease 2 (TREX2).